The sequence spans 400 residues: Tryptophan synthase beta chain (400 aa).

Lys-91 carries the post-translational modification N6-(pyridoxal phosphate)lysine.

The protein belongs to the TrpB family. As to quaternary structure, tetramer of two alpha and two beta chains. It depends on pyridoxal 5'-phosphate as a cofactor.

The enzyme catalyses (1S,2R)-1-C-(indol-3-yl)glycerol 3-phosphate + L-serine = D-glyceraldehyde 3-phosphate + L-tryptophan + H2O. The protein operates within amino-acid biosynthesis; L-tryptophan biosynthesis; L-tryptophan from chorismate: step 5/5. In terms of biological role, the beta subunit is responsible for the synthesis of L-tryptophan from indole and L-serine. This chain is Tryptophan synthase beta chain, found in Listeria monocytogenes serovar 1/2a (strain ATCC BAA-679 / EGD-e).